The following is a 634-amino-acid chain: MSLVPATNYIYTPLNQLKGGTIVNVYGVVKFFKPPYLSKGTDYCSVVTIVDQTNVKLTCLLFSGNYEALPIIYKNGDIVRFHRLKIQVYKKETQGITSSGFASLTFEGTLGAPIIPRTSSKYFNFTTEDHKMVETLRVWASTHMSPSWTLLKLCDVQPMQYFDLTCQLLGKAEVDGASFLLKVWDGTRTPFPSWRVLIQDLVLEGDLSHIHRLQNLTIDILVYDNHVHVARSLKVGSFLRIYSLHTKLQSMNSENQTMLSLEFHLHGGTSYGRGIRVLPETNSDVDQLKKDLESANLTANHHSDVICQSEPDDSFPSSGSVSLYEVERCQQLSATILTDHQYLERTPLCAILKQKAPQQYRIRAKLRSYKPRRLFQSVKLHCPKCHLLQEVPREGDLDIILQDGATKTPDVKLQNTALYDSKIWTTKNQKGRKVAVHFVKNNGILPLSNECLLLIEGGTLSEICKLSNKFNSVIPVRSGHEDLELLDLSAPFLIQGTIHHYGCKQCSSLRSIQNLNSLVDKTSWIPSSVAEVLGIVPLQYVFVMTFTLDDGTGVLEAYLMDSDKFFQIPASEVLMDDDLQKSMDMIMDMFCPPGIKIDAYPWLECFIKSYNVTNGTDNQICYQIFDTTVAEDVI.

It belongs to the telombin family. Homodimer or homooligomer. Component of the shelterin complex (telosome) composed of TERF1, TERF2, TINF2, TERF2IP, ACD and POT1. Binds single-stranded telomeric DNA as a monomer. Associated component of the telomerase holoenzyme complex. Found in a complex with TERF1, TINF2 and TNKS1. Interacts with TNKS1. Forms heterodimers with ACD. Identified in a complex with ACD and single-stranded telomeric DNA.

It is found in the nucleus. The protein localises to the chromosome. The protein resides in the telomere. In terms of biological role, component of the telomerase ribonucleoprotein (RNP) complex that is essential for the replication of chromosome termini. Is a component of the double-stranded telomeric DNA-binding TRF1 complex which is involved in the regulation of telomere length by cis-inhibition of telomerase. Also acts as a single-stranded telomeric DNA-binding protein and thus may act as a downstream effector of the TRF1 complex and may transduce information about telomere maintenance and/or length to the telomere terminus. Component of the shelterin complex (telosome) that is involved in the regulation of telomere length and protection. Shelterin associates with arrays of double-stranded TTAGGG repeats added by telomerase and protects chromosome ends; without its protective activity, telomeres are no longer hidden from the DNA damage surveillance and chromosome ends are inappropriately processed by DNA repair pathways. Binds to two or more telomeric single-stranded 5'-TTAGGG-3' repeats (G-strand) and with high specificity to a minimal telomeric single-stranded 5'-TAGGGTTAG-3' sequence. Binds telomeric single-stranded sequences internally or at proximity of a 3'-end. Its activity is TERT dependent but it does not increase TERT activity by itself. In contrast, the ACD-POT1 heterodimer enhances telomere elongation by increasing telomerase processivity. The chain is Protection of telomeres protein 1 (POT1) from Macaca fascicularis (Crab-eating macaque).